The following is a 706-amino-acid chain: MAKVRVYEYAKAIDVSSKDIIAALKDMNVEVNNHMATLEDDTVKKLDAIYKKAKAKETANEKPAEQKKQSSNKINDRKKNDVQNNQFNKNKKNNNQNKNKNKRGGNNKSQHQQARPVKPKKELPEKIEFTNSMTVGQLAEELGKETAEIIKKLMMLGVMATINQELDKDTVELIASEYGVPVEEVIILEETELEKYEVEDKEEDMQVRPPVVTIMGHVDHGKTTLLDSIRKTKVVEGEAGGITQHIGAYQIEENGKKITFLDTPGHAAFTTMRARGAEVTDTTILVVAADDGVMPQTVEAINHAKAAEVPIIVAVNKIDKPTANPDRVMQELTEHGLVPEAWGGETIFVPLSAKTGEGIDELIEMILLVSEVGELKANPNRAAKGTVIEAELDKGRGSVATLLVQTGTLHVGDPIVVGNTFGRVRAMVNDIGRRVKTAGPSTPVEITGLNDVPNAGDQFLVFKDEKTARQVGEARASKQLDEQRSDKAKLSLDDLFEQIKQGEVKDINLIVKADVQGSAEALTAALQKIEVEGVKVKIIHTGVGAITESDIILASASNAIVIGFNVRPDGNAKSTAETENVDIRLHRIIYKVIDEIEAAMKGMLDPEYEEKVIGQVEVRQTFKVSKIGTIAGGYVTEGTITRDSGIRLIRDGVVIFEGEVDVLKRFKDDVKEVSQGYECGITIKKYNDIREGDVMESFVMQEIERK.

Positions 55-81 (AKETANEKPAEQKKQSSNKINDRKKND) are enriched in basic and acidic residues. The disordered stretch occupies residues 55-127 (AKETANEKPA…KPKKELPEKI (73 aa)). A compositionally biased stretch (low complexity) spans 82–98 (VQNNQFNKNKKNNNQNK). A tr-type G domain is found at 207–376 (VRPPVVTIMG…LLVSEVGELK (170 aa)). The segment at 216-223 (GHVDHGKT) is G1. 216–223 (GHVDHGKT) provides a ligand contact to GTP. The tract at residues 241 to 245 (GITQH) is G2. Residues 262–265 (DTPG) are G3. Residues 262 to 266 (DTPGH) and 316 to 319 (NKID) contribute to the GTP site. The G4 stretch occupies residues 316–319 (NKID). Positions 352–354 (SAK) are G5.

It belongs to the TRAFAC class translation factor GTPase superfamily. Classic translation factor GTPase family. IF-2 subfamily.

It localises to the cytoplasm. Functionally, one of the essential components for the initiation of protein synthesis. Protects formylmethionyl-tRNA from spontaneous hydrolysis and promotes its binding to the 30S ribosomal subunits. Also involved in the hydrolysis of GTP during the formation of the 70S ribosomal complex. This Bacillus pumilus (strain SAFR-032) protein is Translation initiation factor IF-2.